Here is a 465-residue protein sequence, read N- to C-terminus: GTPase Der (465 aa).

EngA-type G domains follow at residues 3–167 (PLVA…PERG) and 179–352 (IHIA…VSAL). GTP is bound by residues 9–16 (GRPNVGKS), 57–61 (DTGGM), 119–122 (NKID), 185–192 (GRPNVGKS), 232–236 (DTAGL), and 297–300 (NKWD). A KH-like domain is found at 353–437 (RQFSTSEVNK…PVRFLFREGD (85 aa)).

The protein belongs to the TRAFAC class TrmE-Era-EngA-EngB-Septin-like GTPase superfamily. EngA (Der) GTPase family. As to quaternary structure, associates with the 50S ribosomal subunit.

GTPase that plays an essential role in the late steps of ribosome biogenesis. In Xylella fastidiosa (strain 9a5c), this protein is GTPase Der.